A 301-amino-acid polypeptide reads, in one-letter code: MNLPDNSIHLQLPRPVCEAIIRPVPEHRADQELSEIYRDLKATFGVPWVGVITQAVAYYRPFFAEAWRRFAPSAKTHFFERASDDIRIRSWELMGQSFVIEGQTDRLREMGYSVREIGQIRAVLDIFDYGNPKYLIFATAIKEGLLSGRTFGGAAGDARCHFPRSPICQIDPIPVMVEEHHAGGTLSQVYADIKQTLQLPFINSDYKAMARWPSYLEQAWGALKPCIDTPAYQAGRFDINARALAALDALPTAYRMSRDDALQAGLSEAQTDELIQVISLFQWMLSGLVLNVTHFKQQALK.

Belongs to the HAD-like hydrolase superfamily. S-2-haloalkanoic acid dehalogenase family. In terms of assembly, homotetramer.

It catalyses the reaction an (R)-2-haloacid + H2O = a (2S)-2-hydroxycarboxylate + a halide anion + H(+). Functionally, catalyzes the hydrolytic dehalogenation of small (R)-2-haloalkanoic acids to yield the corresponding (S)-2-hydroxyalkanoic acids. Acts on acids of short chain lengths, C(2) to C(4), with inversion of configuration at C-2. This is (R)-2-haloacid dehalogenase (hadD) from Pseudomonas putida (Arthrobacter siderocapsulatus).